Here is a 474-residue protein sequence, read N- to C-terminus: Protein Rv3254 (474 aa).

A propeptide spanning residues 1-4 (MTGR) is cleaved from the precursor.

The polypeptide is Protein Rv3254 (Mycobacterium tuberculosis (strain ATCC 25618 / H37Rv)).